A 446-amino-acid chain; its full sequence is Phosphoglucosamine mutase (446 aa).

Ser88 functions as the Phosphoserine intermediate in the catalytic mechanism. Residues Ser88, Asp231, Asp233, and Asp235 each coordinate Mg(2+). Ser88 bears the Phosphoserine mark.

This sequence belongs to the phosphohexose mutase family. It depends on Mg(2+) as a cofactor. Post-translationally, activated by phosphorylation.

It catalyses the reaction alpha-D-glucosamine 1-phosphate = D-glucosamine 6-phosphate. Its function is as follows. Catalyzes the conversion of glucosamine-6-phosphate to glucosamine-1-phosphate. This chain is Phosphoglucosamine mutase, found in Methanococcus vannielii (strain ATCC 35089 / DSM 1224 / JCM 13029 / OCM 148 / SB).